The chain runs to 488 residues: MPKVKALQCALALEIRSVTCPGVLLKDKEDIYLSICVFGQYKKTQCVPATFPLVFNARMVFEKVFPEAVDPGDVVAQLEYDTAVFELIQLVPPVGETLSTYDENTRDFMFPGPNQISGHHDSNRQVTMRRISGLRGIAPKLEFSTTSVITECLISSRKCRTQDKFTYHSAPVEKPHGRLQCRTSRSQKKKSKSPERSKYCINTKNYEQPTISSKSHSPSPYTKRRMCELSEDTRRRLAHLNLGPYEFKKETDKPPFVIRHVDPPSPRADNFFGSPGRDCERDGWVRMHSDHPHLGCCRAKDYKVIRSPHGRDFEDPFERCEDYLSPRTCSKPQHSARTLLVHSAPSTTPKHCASPVLNRASLRERFHSDWCSPPNCDEIHDRVKDVLKSHQAHGRHLCEERDPEKEDELELKRSLLYRDSAYDSDPEYSSFQRPRGSFHLDDGECWSNRAASCKGKSHRPVFENSMDKMYRNLYQKACSSVSHTQESF.

Residues 1 to 17 form the signal peptide; that stretch reads MPKVKALQCALALEIRS. The interval 175 to 225 is disordered; the sequence is PHGRLQCRTSRSQKKKSKSPERSKYCINTKNYEQPTISSKSHSPSPYTKRR. Over residues 200 to 220 the composition is skewed to polar residues; that stretch reads CINTKNYEQPTISSKSHSPSP. Ser217 and Ser219 each carry phosphoserine. Lys248 is covalently cross-linked (Glycyl lysine isopeptide (Lys-Gly) (interchain with G-Cter in SUMO2)). A phosphoserine mark is found at Ser265, Ser274, Ser325, Ser343, Ser346, Ser354, Ser424, Ser465, and Ser487.

Belongs to the SPATA6 family. As to quaternary structure, interacts with MYL6. In terms of tissue distribution, testis-specific, in spermatocytes.

It localises to the secreted. It is found in the cell projection. Its subcellular location is the cilium. The protein resides in the flagellum. Functionally, required for formation of the sperm connecting piece during spermiogenesis. Sperm connecting piece is essential for linking the developing flagellum to the head during late spermiogenesis. May be involved in myosin-based microfilament transport through interaction with myosin subunits. This is Spermatogenesis-associated protein 6 (Spata6) from Rattus norvegicus (Rat).